Reading from the N-terminus, the 174-residue chain is MARPLRALIFGRFQPFHLGHLKVTKWALEKFDELVLLVGMANESHTVLNPFTAGERIWMMREALKDEGVDLSRIITATVPTMSVYVGHAFYIINLVPKVDSIITRNPVIAQVFHDAGLEVIAPPEFDRNLYRGSYIRKLMLEDGNWRELVPKKVAAIIDEIGGVERLKKAASRD.

The protein belongs to the archaeal NMN adenylyltransferase family.

This is an uncharacterized protein from Archaeoglobus fulgidus (strain ATCC 49558 / DSM 4304 / JCM 9628 / NBRC 100126 / VC-16).